The primary structure comprises 393 residues: MFAFVRFLEDNVCYALPATRVREFHPHSTEDFDSRRVYAVYRSLEEEAGFPGAPQQAQILALAENKTDLENRVMQKKIKIPKISLNYSEQPWEYKDYEDEEDSEFRHFKRADGRKQVESPHKSIEAVVARLEKQSFIGPSHNTRCDEVFSEPFHSVGHMDRLEAAVVPRVLYEELLRSYQQQQQEMKHIQHELERTRKQLVQQAKKLKDYGSLVTEVKELRVLNRRLQDVLLLRLGSGPTIELQIDKSDYCDPEPEPEPEPEIQKISNEEVHLGSGVWVNEEKWHQLQATQGDSKYTKNLAVMIWGTDVLKNRSVTGVATKKKKDAVPKPPLSPHKLSVVRECMYDRIARETMDENEIAQRLSKVNKYICEKIMDINKSCKNEERREAKYNVQ.

Residues 169 to 212 (RVLYEELLRSYQQQQQEMKHIQHELERTRKQLVQQAKKLKDYGS) are a coiled coil. Residues 274-380 (GSGVWVNEEK…EKIMDINKSC (107 aa)) enclose the BEN domain.

Functionally, may act as a transcriptional repressor. The polypeptide is BEN domain-containing protein 5 (bend5) (Xenopus laevis (African clawed frog)).